The primary structure comprises 313 residues: Formimidoylglutamase (313 aa).

H130, D155, H157, D159, D241, and D243 together coordinate Mn(2+).

The protein belongs to the arginase family. The cofactor is Mn(2+).

The catalysed reaction is N-formimidoyl-L-glutamate + H2O = formamide + L-glutamate. The protein operates within amino-acid degradation; L-histidine degradation into L-glutamate; L-glutamate from N-formimidoyl-L-glutamate (hydrolase route): step 1/1. Its function is as follows. Catalyzes the conversion of N-formimidoyl-L-glutamate to L-glutamate and formamide. The protein is Formimidoylglutamase of Salmonella agona (strain SL483).